Here is a 608-residue protein sequence, read N- to C-terminus: 1-deoxy-D-xylulose-5-phosphate synthase (608 aa).

Residues histidine 66 and 107-109 (GHA) contribute to the thiamine diphosphate site. Mg(2+) is bound at residue aspartate 138. Residues 139–140 (GA), asparagine 167, phenylalanine 277, and glutamate 350 contribute to the thiamine diphosphate site. Residue asparagine 167 participates in Mg(2+) binding.

It belongs to the transketolase family. DXPS subfamily. As to quaternary structure, homodimer. Requires Mg(2+) as cofactor. Thiamine diphosphate is required as a cofactor.

It carries out the reaction D-glyceraldehyde 3-phosphate + pyruvate + H(+) = 1-deoxy-D-xylulose 5-phosphate + CO2. The protein operates within metabolic intermediate biosynthesis; 1-deoxy-D-xylulose 5-phosphate biosynthesis; 1-deoxy-D-xylulose 5-phosphate from D-glyceraldehyde 3-phosphate and pyruvate: step 1/1. Functionally, catalyzes the acyloin condensation reaction between C atoms 2 and 3 of pyruvate and glyceraldehyde 3-phosphate to yield 1-deoxy-D-xylulose-5-phosphate (DXP). The chain is 1-deoxy-D-xylulose-5-phosphate synthase from Thermotoga sp. (strain RQ2).